The chain runs to 347 residues: NADH-ubiquinone oxidoreductase chain 2 (347 aa).

A run of 10 helical transmembrane segments spans residues 3–23, 25–45, 59–79, 96–116, 127–147, 150–170, 193–213, 240–260, 274–294, and 323–343; these read PIIL…TMIS, HWLL…PILM, YFLT…INTA, LVTM…FWVP, GMLL…QIFP, NPNI…WGGL, ILMY…MLTI, ITLT…LTGF, SNIM…YFYM, and IFLL…SPAL.

It belongs to the complex I subunit 2 family. In terms of assembly, core subunit of respiratory chain NADH dehydrogenase (Complex I) which is composed of 45 different subunits. Interacts with TMEM242.

Its subcellular location is the mitochondrion inner membrane. The catalysed reaction is a ubiquinone + NADH + 5 H(+)(in) = a ubiquinol + NAD(+) + 4 H(+)(out). Its function is as follows. Core subunit of the mitochondrial membrane respiratory chain NADH dehydrogenase (Complex I) which catalyzes electron transfer from NADH through the respiratory chain, using ubiquinone as an electron acceptor. Essential for the catalytic activity and assembly of complex I. This is NADH-ubiquinone oxidoreductase chain 2 from Lemur catta (Ring-tailed lemur).